Consider the following 353-residue polypeptide: Methylthioribose-1-phosphate isomerase (353 aa).

Substrate-binding positions include 51 to 53 (RGA), Arg-94, and Gln-203. Asp-244 functions as the Proton donor in the catalytic mechanism. 254-255 (NK) lines the substrate pocket.

It belongs to the eIF-2B alpha/beta/delta subunits family. MtnA subfamily.

It catalyses the reaction 5-(methylsulfanyl)-alpha-D-ribose 1-phosphate = 5-(methylsulfanyl)-D-ribulose 1-phosphate. It functions in the pathway amino-acid biosynthesis; L-methionine biosynthesis via salvage pathway; L-methionine from S-methyl-5-thio-alpha-D-ribose 1-phosphate: step 1/6. Its function is as follows. Catalyzes the interconversion of methylthioribose-1-phosphate (MTR-1-P) into methylthioribulose-1-phosphate (MTRu-1-P). The chain is Methylthioribose-1-phosphate isomerase from Nostoc punctiforme (strain ATCC 29133 / PCC 73102).